Consider the following 203-residue polypeptide: Thymidylate kinase (203 aa).

Residue Gly-10 to Thr-17 coordinates ATP.

Belongs to the thymidylate kinase family.

The enzyme catalyses dTMP + ATP = dTDP + ADP. Functionally, phosphorylation of dTMP to form dTDP in both de novo and salvage pathways of dTTP synthesis. The chain is Thymidylate kinase from Carboxydothermus hydrogenoformans (strain ATCC BAA-161 / DSM 6008 / Z-2901).